Consider the following 99-residue polypeptide: Aspartyl/glutamyl-tRNA(Asn/Gln) amidotransferase subunit C (99 aa).

The protein belongs to the GatC family. As to quaternary structure, heterotrimer of A, B and C subunits.

It catalyses the reaction L-glutamyl-tRNA(Gln) + L-glutamine + ATP + H2O = L-glutaminyl-tRNA(Gln) + L-glutamate + ADP + phosphate + H(+). The catalysed reaction is L-aspartyl-tRNA(Asn) + L-glutamine + ATP + H2O = L-asparaginyl-tRNA(Asn) + L-glutamate + ADP + phosphate + 2 H(+). Functionally, allows the formation of correctly charged Asn-tRNA(Asn) or Gln-tRNA(Gln) through the transamidation of misacylated Asp-tRNA(Asn) or Glu-tRNA(Gln) in organisms which lack either or both of asparaginyl-tRNA or glutaminyl-tRNA synthetases. The reaction takes place in the presence of glutamine and ATP through an activated phospho-Asp-tRNA(Asn) or phospho-Glu-tRNA(Gln). The protein is Aspartyl/glutamyl-tRNA(Asn/Gln) amidotransferase subunit C of Cupriavidus necator (strain ATCC 17699 / DSM 428 / KCTC 22496 / NCIMB 10442 / H16 / Stanier 337) (Ralstonia eutropha).